We begin with the raw amino-acid sequence, 214 residues long: tRNA (guanine-N(7)-)-methyltransferase (214 aa).

S-adenosyl-L-methionine-binding residues include Glu43, Glu68, Asp95, and Asp117. Asp117 is a catalytic residue. Substrate is bound by residues Lys121, Asp153, and 191–194 (TEYE).

The protein belongs to the class I-like SAM-binding methyltransferase superfamily. TrmB family.

It carries out the reaction guanosine(46) in tRNA + S-adenosyl-L-methionine = N(7)-methylguanosine(46) in tRNA + S-adenosyl-L-homocysteine. The protein operates within tRNA modification; N(7)-methylguanine-tRNA biosynthesis. Functionally, catalyzes the formation of N(7)-methylguanine at position 46 (m7G46) in tRNA. The chain is tRNA (guanine-N(7)-)-methyltransferase from Brevibacillus brevis (strain 47 / JCM 6285 / NBRC 100599).